Here is a 209-residue protein sequence, read N- to C-terminus: Chloramphenicol acetyltransferase (209 aa).

Histidine 78 is an active-site residue.

It belongs to the transferase hexapeptide repeat family.

The enzyme catalyses chloramphenicol + acetyl-CoA = chloramphenicol 3-acetate + CoA. Functionally, this enzyme is an effector of chloramphenicol resistance in bacteria. This is Chloramphenicol acetyltransferase (cat) from Agrobacterium fabrum (strain C58 / ATCC 33970) (Agrobacterium tumefaciens (strain C58)).